The following is a 73-amino-acid chain: Kappa-scoloptoxin(03)-Ssm1b (73 aa).

A signal peptide spans 1-23 (MKPSMAILLVIALIIFSLDKSYS). Cystine bridges form between Cys-32–Cys-58, Cys-41–Cys-57, and Cys-44–Cys-67.

In terms of processing, contains 3 disulfide bonds. In terms of tissue distribution, expressed by the venom gland.

The protein localises to the secreted. Inhibits voltage-gated potassium channels. The sequence is that of Kappa-scoloptoxin(03)-Ssm1b from Scolopendra mutilans (Chinese red-headed centipede).